Here is a 340-residue protein sequence, read N- to C-terminus: MLDPRARTLLKTLIERYIADGQPVGSRTLSRYSGLELSPATIRNVMSDLEELGLVSSPHTSAGRVPTPRGYRLFVDTMLTVESPIDSDAVTRLVQTTLQAGEPQQKVVAAAASVLSNLSQFAGVVLTPRRSHVFKQIEFLRLSDKRILLIIVTPEGDVQNRMIATQRDYSPAQLTEASNYINAHFAGLSFDEVRRRLRGEIDELRGDMTALMHAAVTASTEEPADEETVLISGERNLLEVADLSSDMARLRKLFDVFDQKTSLLQLLDVSSHAQGVQIFIGGESTLVPIDEMSVVTAPYEVNGKIVGTLGVIGPTRMAYNRVIPIVDITARLLSLTLSQQ.

It belongs to the HrcA family.

Negative regulator of class I heat shock genes (grpE-dnaK-dnaJ and groELS operons). Prevents heat-shock induction of these operons. In Burkholderia thailandensis (strain ATCC 700388 / DSM 13276 / CCUG 48851 / CIP 106301 / E264), this protein is Heat-inducible transcription repressor HrcA.